We begin with the raw amino-acid sequence, 238 residues long: tRNA (guanine-N(7)-)-methyltransferase (238 aa).

Residues Glu71, Glu96, Asp123, and Asp146 each coordinate S-adenosyl-L-methionine. Asp146 is a catalytic residue. Residues Lys150, Asp182, and 217–220 (TKFE) contribute to the substrate site.

The protein belongs to the class I-like SAM-binding methyltransferase superfamily. TrmB family.

It carries out the reaction guanosine(46) in tRNA + S-adenosyl-L-methionine = N(7)-methylguanosine(46) in tRNA + S-adenosyl-L-homocysteine. The protein operates within tRNA modification; N(7)-methylguanine-tRNA biosynthesis. In terms of biological role, catalyzes the formation of N(7)-methylguanine at position 46 (m7G46) in tRNA. The chain is tRNA (guanine-N(7)-)-methyltransferase from Methylobacillus flagellatus (strain ATCC 51484 / DSM 6875 / VKM B-1610 / KT).